Reading from the N-terminus, the 222-residue chain is Large ribosomal subunit protein uL4 (222 aa).

The interval 67 to 87 (QKGTGNARAGSKRTNVRRGGG) is disordered.

The protein belongs to the universal ribosomal protein uL4 family. As to quaternary structure, part of the 50S ribosomal subunit.

Its function is as follows. One of the primary rRNA binding proteins, this protein initially binds near the 5'-end of the 23S rRNA. It is important during the early stages of 50S assembly. It makes multiple contacts with different domains of the 23S rRNA in the assembled 50S subunit and ribosome. In terms of biological role, forms part of the polypeptide exit tunnel. The protein is Large ribosomal subunit protein uL4 of Rhodopirellula baltica (strain DSM 10527 / NCIMB 13988 / SH1).